Here is a 218-residue protein sequence, read N- to C-terminus: Holliday junction branch migration complex subunit RuvA (218 aa).

The segment at 1-64 (MIGKITGRLE…EDVMQLFGFT (64 aa)) is domain I. The domain II stretch occupies residues 65-143 (TLTEKEWHRL…SVMGMSDTQA (79 aa)). A flexible linker region spans residues 144–164 (TVAAQSSDAVIETRAAPSPVV). Residues 165–218 (QNPSAQAEALSALSNLGYAPGDAAAAVAQAAGELPDAETPDLIRAALKRLAPKG) form a domain III region.

This sequence belongs to the RuvA family. As to quaternary structure, homotetramer. Forms an RuvA(8)-RuvB(12)-Holliday junction (HJ) complex. HJ DNA is sandwiched between 2 RuvA tetramers; dsDNA enters through RuvA and exits via RuvB. An RuvB hexamer assembles on each DNA strand where it exits the tetramer. Each RuvB hexamer is contacted by two RuvA subunits (via domain III) on 2 adjacent RuvB subunits; this complex drives branch migration. In the full resolvosome a probable DNA-RuvA(4)-RuvB(12)-RuvC(2) complex forms which resolves the HJ.

Its subcellular location is the cytoplasm. The RuvA-RuvB-RuvC complex processes Holliday junction (HJ) DNA during genetic recombination and DNA repair, while the RuvA-RuvB complex plays an important role in the rescue of blocked DNA replication forks via replication fork reversal (RFR). RuvA specifically binds to HJ cruciform DNA, conferring on it an open structure. The RuvB hexamer acts as an ATP-dependent pump, pulling dsDNA into and through the RuvAB complex. HJ branch migration allows RuvC to scan DNA until it finds its consensus sequence, where it cleaves and resolves the cruciform DNA. The protein is Holliday junction branch migration complex subunit RuvA of Roseobacter denitrificans (strain ATCC 33942 / OCh 114) (Erythrobacter sp. (strain OCh 114)).